The following is a 258-amino-acid chain: Transcriptional repressor AccR (258 aa).

The 56-residue stretch at 6 to 61 (TQDRQAKIVELLRDEQFLAIGRLTEHFQISVATARRDLSELHEAGLLRRTHGGAVS) folds into the HTH deoR-type domain. The H-T-H motif DNA-binding region spans 23–42 (LAIGRLTEHFQISVATARRD).

In terms of biological role, represses opine catabolism and conjugal transfer of the nopaline Ti plasmid pTiC58. This Agrobacterium fabrum (strain C58 / ATCC 33970) (Agrobacterium tumefaciens (strain C58)) protein is Transcriptional repressor AccR (accR).